Consider the following 503-residue polypeptide: Cytochrome P450 6l1 (503 aa).

A heme-binding site is contributed by Cys438.

Belongs to the cytochrome P450 family. It depends on heme as a cofactor. In terms of tissue distribution, detected only in testes and accessory glands of male adults.

It localises to the endoplasmic reticulum membrane. The protein resides in the microsome membrane. The polypeptide is Cytochrome P450 6l1 (CYP6L1) (Blattella germanica (German cockroach)).